A 257-amino-acid polypeptide reads, in one-letter code: Gamma-secretase subunit APH-1B (257 aa).

The next 7 membrane-spanning stretches (helical) occupy residues 5-25 (VFFGCAFIAFGPALALYVFTI), 32-52 (IIFLIAGAFFWLVSLLISSLV), 71-91 (LLIFGAFVSVYIQEMFRFAYY), 115-135 (LLAYVSGLGFGIMSGVFSFVN), 158-178 (YSAFMTLVIILLHVFWGIVFF), 186-206 (WGILLIVLLTHLLVSAQTFIS), and 213-233 (LASAFIILVLMGTWAFLAAGG).

It belongs to the APH-1 family. As to quaternary structure, probable component of the gamma-secretase complex, a complex composed of a presenilin homodimer (PSEN1 or PSEN2), nicastrin (NCSTN), APH1 (APH1A or APH1B) and PEN2. Such minimal complex is sufficient for secretase activity, although other components may exist. Interacts with PSEN1 and PSEN2. Weakly or not expressed in leukocytes, lung, placenta, small intestine, liver, kidney, spleen thymus, colon, skeletal muscle, heart and brain.

The protein resides in the membrane. Its function is as follows. Probable subunit of the gamma-secretase complex, an endoprotease complex that catalyzes the intramembrane cleavage of integral proteins such as Notch receptors and APP (amyloid-beta precursor protein). It probably represents a stabilizing cofactor for the presenilin homodimer that promotes the formation of a stable complex. Probably present in a minority of gamma-secretase complexes compared to APH1A. This is Gamma-secretase subunit APH-1B (APH1B) from Homo sapiens (Human).